We begin with the raw amino-acid sequence, 362 residues long: MKELEVRTASSAYPVYIGEGIRKQAAALLSSLNRPLTKILLIIDAEVDRLYGDEMFRLLNETWPVKKVIVPSGEEAKSLKEYERIQTEAIAFHMDRSSCMIAFGGGVTGDLAGFCAATFMRGIDFIQMPTTLLAHDSAVGGKVAVNHKLGKNLIGAFYQPKAVIYDTELLKTLPEQELRSGMAEVIKHAFIADHAFLEKLLTFDTLQGLTSAELNEMIYKGISIKSAVVREDEKEEGIRAFLNFGHTLGHAVEAEYGYGRITHGDAVALGMQFALYVSEQVARCKMNRKELTQWLIGLGYPGSIRQDIETPVLSARMMNDKKTRGGMTQFIVLKELGEARDCMLSKDELENLLNKWRMEETA.

NAD(+) is bound by residues 72 to 77, 106 to 110, 130 to 131, K142, and K151; these read SGEEAK, GVTGD, and TT. The Zn(2+) site is built by E184, H246, and H263.

It belongs to the sugar phosphate cyclases superfamily. Dehydroquinate synthase family. Requires Co(2+) as cofactor. The cofactor is Zn(2+). It depends on NAD(+) as a cofactor.

It is found in the cytoplasm. The enzyme catalyses 7-phospho-2-dehydro-3-deoxy-D-arabino-heptonate = 3-dehydroquinate + phosphate. It functions in the pathway metabolic intermediate biosynthesis; chorismate biosynthesis; chorismate from D-erythrose 4-phosphate and phosphoenolpyruvate: step 2/7. Its function is as follows. Catalyzes the conversion of 3-deoxy-D-arabino-heptulosonate 7-phosphate (DAHP) to dehydroquinate (DHQ). In Bacillus velezensis (strain DSM 23117 / BGSC 10A6 / LMG 26770 / FZB42) (Bacillus amyloliquefaciens subsp. plantarum), this protein is 3-dehydroquinate synthase.